A 350-amino-acid chain; its full sequence is Dihydroorotate dehydrogenase (quinone) (350 aa).

FMN contacts are provided by residues 67–71 (AGFDK) and glycine 91. Lysine 71 is a binding site for substrate. 116-120 (NRMGF) serves as a coordination point for substrate. Residues asparagine 144 and asparagine 177 each coordinate FMN. Asparagine 177 contributes to the substrate binding site. Residue serine 180 is the Nucleophile of the active site. Substrate is bound at residue asparagine 182. Residues lysine 213 and threonine 241 each coordinate FMN. Residue 242–243 (NT) participates in substrate binding. Residues 249–268 (ASLHSDAADEEGGLSGAPIT) form a disordered region. FMN is bound by residues glycine 264, glycine 291, and 312 to 313 (YT).

This sequence belongs to the dihydroorotate dehydrogenase family. Type 2 subfamily. Monomer. Requires FMN as cofactor.

Its subcellular location is the cell membrane. It catalyses the reaction (S)-dihydroorotate + a quinone = orotate + a quinol. The protein operates within pyrimidine metabolism; UMP biosynthesis via de novo pathway; orotate from (S)-dihydroorotate (quinone route): step 1/1. Its function is as follows. Catalyzes the conversion of dihydroorotate to orotate with quinone as electron acceptor. In Natronomonas pharaonis (strain ATCC 35678 / DSM 2160 / CIP 103997 / JCM 8858 / NBRC 14720 / NCIMB 2260 / Gabara) (Halobacterium pharaonis), this protein is Dihydroorotate dehydrogenase (quinone).